Reading from the N-terminus, the 434-residue chain is Lipoyl synthase, mitochondrial (434 aa).

Residues 1–31 constitute a mitochondrion transit peptide; it reads MAASARGLRTLQSAHSSTTVPRLQLAVSRCY. The span at 34 to 54 shows a compositional bias: low complexity; sequence TTSPDPPITNSSNSSNSTPTP. A disordered region spans residues 34 to 55; it reads TTSPDPPITNSSNSSNSTPTPK. Residues Cys-144, Cys-149, Cys-155, Cys-175, Cys-179, Cys-182, and Ser-390 each contribute to the [4Fe-4S] cluster site. One can recognise a Radical SAM core domain in the interval 158-379; that stretch reads GSSKSAATAT…KERALEMGFL (222 aa).

Belongs to the radical SAM superfamily. Lipoyl synthase family. [4Fe-4S] cluster is required as a cofactor.

It localises to the mitochondrion. It carries out the reaction [[Fe-S] cluster scaffold protein carrying a second [4Fe-4S](2+) cluster] + N(6)-octanoyl-L-lysyl-[protein] + 2 oxidized [2Fe-2S]-[ferredoxin] + 2 S-adenosyl-L-methionine + 4 H(+) = [[Fe-S] cluster scaffold protein] + N(6)-[(R)-dihydrolipoyl]-L-lysyl-[protein] + 4 Fe(3+) + 2 hydrogen sulfide + 2 5'-deoxyadenosine + 2 L-methionine + 2 reduced [2Fe-2S]-[ferredoxin]. Its pathway is protein modification; protein lipoylation via endogenous pathway; protein N(6)-(lipoyl)lysine from octanoyl-[acyl-carrier-protein]: step 2/2. Functionally, catalyzes the radical-mediated insertion of two sulfur atoms into the C-6 and C-8 positions of the octanoyl moiety bound to the lipoyl domains of lipoate-dependent enzymes, thereby converting the octanoylated domains into lipoylated derivatives. The polypeptide is Lipoyl synthase, mitochondrial (Paracoccidioides brasiliensis (strain Pb03)).